Reading from the N-terminus, the 43-residue chain is Cytochrome b559 subunit beta (43 aa).

A helical transmembrane segment spans residues 18 to 34 (WLAIHGLAIPTVFFLGG). Heme is bound at residue histidine 22.

It belongs to the PsbE/PsbF family. Heterodimer of an alpha subunit and a beta subunit. PSII is composed of 1 copy each of membrane proteins PsbA, PsbB, PsbC, PsbD, PsbE, PsbF, PsbH, PsbI, PsbJ, PsbK, PsbL, PsbM, PsbT, PsbX, PsbY, PsbZ, Psb30/Ycf12, at least 3 peripheral proteins of the oxygen-evolving complex and a large number of cofactors. It forms dimeric complexes. Heme b is required as a cofactor.

Its subcellular location is the plastid. It localises to the chloroplast thylakoid membrane. Its function is as follows. This b-type cytochrome is tightly associated with the reaction center of photosystem II (PSII). PSII is a light-driven water:plastoquinone oxidoreductase that uses light energy to abstract electrons from H(2)O, generating O(2) and a proton gradient subsequently used for ATP formation. It consists of a core antenna complex that captures photons, and an electron transfer chain that converts photonic excitation into a charge separation. This chain is Cytochrome b559 subunit beta, found in Phaeodactylum tricornutum (strain CCAP 1055/1).